Consider the following 75-residue polypeptide: Ferredoxin-thioredoxin reductase, variable chain (75 aa).

The interval 43–46 (QGRP) is interaction with ferredoxin.

It belongs to the ferredoxin thioredoxin reductase alpha subunit family. As to quaternary structure, heterodimer of subunit A (variable subunit) and subunit B (catalytic subunit). Heterodimeric FTR forms a complex with ferredoxin and thioredoxin.

Variable subunit of the ferredoxin-thioredoxin reductase (FTR), which catalyzes the two-electron reduction of thioredoxins by the electrons provided by reduced ferredoxin. The protein is Ferredoxin-thioredoxin reductase, variable chain (ftrV) of Synechocystis sp. (strain ATCC 27184 / PCC 6803 / Kazusa).